A 170-amino-acid polypeptide reads, in one-letter code: Lipoprotein signal peptidase (170 aa).

Helical transmembrane passes span 12–32, 67–87, and 94–113; these read WYWI…WVLS, WQRW…SVWL, and MWRL…GNLI. Active-site residues include aspartate 123 and aspartate 141. A helical membrane pass occupies residues 133–153; the sequence is HFPAFNIADSAICIGAGLIIL.

It belongs to the peptidase A8 family.

It is found in the cell inner membrane. It catalyses the reaction Release of signal peptides from bacterial membrane prolipoproteins. Hydrolyzes -Xaa-Yaa-Zaa-|-(S,diacylglyceryl)Cys-, in which Xaa is hydrophobic (preferably Leu), and Yaa (Ala or Ser) and Zaa (Gly or Ala) have small, neutral side chains.. It functions in the pathway protein modification; lipoprotein biosynthesis (signal peptide cleavage). Its function is as follows. This protein specifically catalyzes the removal of signal peptides from prolipoproteins. The chain is Lipoprotein signal peptidase from Shewanella piezotolerans (strain WP3 / JCM 13877).